Here is a 143-residue protein sequence, read N- to C-terminus: Transcriptional regulator MraZ (143 aa).

SpoVT-AbrB domains are found at residues 5 to 47 and 76 to 119; these read EYHH…SMEE and AMES…AKER.

The protein belongs to the MraZ family. Forms oligomers.

The protein localises to the cytoplasm. The protein resides in the nucleoid. The chain is Transcriptional regulator MraZ from Lactobacillus helveticus (strain DPC 4571).